The chain runs to 1503 residues: Lysine-specific demethylase 5B-B (1503 aa).

The JmjN domain occupies 15–56 (CPVFEPSWEEFKDPFAFINKIRPIAEKTGICKVRPPPDWQPP). Residues 80–170 (TRVKLNFLDQ…ILYPYNLFQS (91 aa)) enclose the ARID domain. Residues 202-211 (VPLQPSNTSA) show a composition bias toward polar residues. Disordered stretches follow at residues 202–223 (VPLQ…KTES) and 268–287 (IKEL…NIPP). Residues 268 to 278 (IKELNPEPEKS) show a composition bias toward basic and acidic residues. Residues 295 to 345 (LYVCLVCGKGNDEDRLLLCDGCDDSYHTFCLIPPLTDVPKGDWRCPKCLTQ) form a PHD-type 1 zinc finger. The region spanning 439-605 (KYLQCGWNLN…LGRQCVDHYR (167 aa)) is the JmjC domain. Fe cation is bound by residues His-485, Asp-488, and His-573. A PHD-type 2 zinc finger spans residues 1168–1216 (LKVCVCQKPAMGAMLQCELCRDAFHSVCVRGPSDPLDPEAWLCPLCLRS). 2 disordered regions span residues 1362–1381 (TNTS…TETD) and 1403–1442 (ERGT…DSEE). The segment at 1444–1497 (MTLCPAESCLQPEGEEVDWVQCDCCNRWFHMICVGVSAELAAEEDYMCVSCSTS) adopts a PHD-type 3 zinc-finger fold.

This sequence belongs to the JARID1 histone demethylase family. The cofactor is Fe(2+).

It is found in the nucleus. It carries out the reaction N(6),N(6),N(6)-trimethyl-L-lysyl(4)-[histone H3] + 3 2-oxoglutarate + 3 O2 = L-lysyl(4)-[histone H3] + 3 formaldehyde + 3 succinate + 3 CO2. Its function is as follows. Histone demethylase that demethylates 'Lys-4' of histone H3, thereby playing a central role in histone code. Does not demethylate histone H3 'Lys-9' or H3 'Lys-27'. Demethylates trimethylated, dimethylated and monomethylated H3 'Lys-4'. Acts as a transcriptional corepressor. The protein is Lysine-specific demethylase 5B-B (kdm5bb) of Danio rerio (Zebrafish).